A 372-amino-acid chain; its full sequence is Glutamate 5-kinase (372 aa).

An ATP-binding site is contributed by K14. Substrate contacts are provided by S54, D141, and N153. 173-174 (TD) contributes to the ATP binding site. The PUA domain occupies 280 to 358 (RGHVVIDAGA…GEIEIVLGYM (79 aa)).

This sequence belongs to the glutamate 5-kinase family.

It localises to the cytoplasm. The catalysed reaction is L-glutamate + ATP = L-glutamyl 5-phosphate + ADP. The protein operates within amino-acid biosynthesis; L-proline biosynthesis; L-glutamate 5-semialdehyde from L-glutamate: step 1/2. In terms of biological role, catalyzes the transfer of a phosphate group to glutamate to form L-glutamate 5-phosphate. This Burkholderia orbicola (strain MC0-3) protein is Glutamate 5-kinase.